Consider the following 65-residue polypeptide: MIVINIKENEPIDKALKRFKKKFEKTGVLKALRARSYYEKKSVRLRKEVIRASYRLKLQEAASND.

This sequence belongs to the bacterial ribosomal protein bS21 family.

The protein is Small ribosomal subunit protein bS21 of Cytophaga hutchinsonii (strain ATCC 33406 / DSM 1761 / CIP 103989 / NBRC 15051 / NCIMB 9469 / D465).